The sequence spans 118 residues: Ribosome-binding factor A (118 aa).

It belongs to the RbfA family. In terms of assembly, monomer. Binds 30S ribosomal subunits, but not 50S ribosomal subunits or 70S ribosomes.

Its subcellular location is the cytoplasm. In terms of biological role, one of several proteins that assist in the late maturation steps of the functional core of the 30S ribosomal subunit. Associates with free 30S ribosomal subunits (but not with 30S subunits that are part of 70S ribosomes or polysomes). Required for efficient processing of 16S rRNA. May interact with the 5'-terminal helix region of 16S rRNA. In Bacillus thuringiensis (strain Al Hakam), this protein is Ribosome-binding factor A.